Consider the following 79-residue polypeptide: UPF0180 protein BCE_1513 (79 aa).

Belongs to the UPF0180 family.

This chain is UPF0180 protein BCE_1513, found in Bacillus cereus (strain ATCC 10987 / NRS 248).